Reading from the N-terminus, the 333-residue chain is UDP-N-acetylglucosamine 4,6-dehydratase (inverting) (333 aa).

NADP(+) is bound by residues 19-22 (TGSF), 43-48 (SRDELK), 67-68 (DV), Ala-87, Lys-91, and 129-130 (LS). Substrate is bound at residue Lys-91. Lys-133 is an active-site residue. Tyr-141 and Lys-145 together coordinate NADP(+). Position 173 (Asn-173) interacts with substrate. 174-178 (VVGSR) provides a ligand contact to NADP(+). Substrate is bound by residues Val-181, Thr-199, Arg-258, and Glu-261.

This sequence belongs to the polysaccharide synthase family. Homohexamer. NADP(+) serves as cofactor.

It carries out the reaction UDP-N-acetyl-alpha-D-glucosamine = UDP-2-acetamido-2,6-dideoxy-beta-L-arabino-hex-4-ulose + H2O. Catalyzes the first step in the biosynthesis of pseudaminic acid, a sialic-acid-like sugar that is used to modify flagellin. Has both C6 dehydratase and C5 epimerase activities that result in the production of both UDP-2-acetamido-2,6-dideoxy-beta-L-arabino-4-hexulose and UDP-2-acetamido-2,6-dideoxy-alpha-D-xylo-4-hexulose. This Helicobacter pylori (strain ATCC 700392 / 26695) (Campylobacter pylori) protein is UDP-N-acetylglucosamine 4,6-dehydratase (inverting) (pseB).